We begin with the raw amino-acid sequence, 640 residues long: Asparagine synthetase domain-containing protein 1 (640 aa).

Cys-2 functions as the For GATase activity in the catalytic mechanism. One can recognise a Glutamine amidotransferase type-2 domain in the interval 2–184 (CGICCAVSFS…ASGIFRIDLK (183 aa)). An Asparagine synthetase domain is found at 286–602 (QFIGVLSTAV…GLTASALLPK (317 aa)).

The polypeptide is Asparagine synthetase domain-containing protein 1 (ASNSD1) (Bos taurus (Bovine)).